A 339-amino-acid polypeptide reads, in one-letter code: DNA-directed RNA polymerase subunit alpha (339 aa).

The alpha N-terminal domain (alpha-NTD) stretch occupies residues 1–233 (MVREEIAVAT…DLFIPFLHAE (233 aa)). Residues 267–339 (KKMALKSIFI…FGFDLPKNGK (73 aa)) are alpha C-terminal domain (alpha-CTD).

Belongs to the RNA polymerase alpha chain family. As to quaternary structure, in plastids the minimal PEP RNA polymerase catalytic core is composed of four subunits: alpha, beta, beta', and beta''. When a (nuclear-encoded) sigma factor is associated with the core the holoenzyme is formed, which can initiate transcription.

The protein resides in the plastid. Its subcellular location is the chloroplast. It carries out the reaction RNA(n) + a ribonucleoside 5'-triphosphate = RNA(n+1) + diphosphate. DNA-dependent RNA polymerase catalyzes the transcription of DNA into RNA using the four ribonucleoside triphosphates as substrates. The sequence is that of DNA-directed RNA polymerase subunit alpha from Piper cenocladum (Ant piper).